Here is a 121-residue protein sequence, read N- to C-terminus: Immunoglobulin kappa variable 4-1 (121 aa).

The first 20 residues, 1–20, serve as a signal peptide directing secretion; that stretch reads MVLQTQVFISLLLWISGAYG. Positions 21 to 43 are framework-1; that stretch reads DIVMTQSPDSLAVSLGERATINC. Positions 21–121 constitute an Ig-like domain; the sequence is DIVMTQSPDS…YYCQQYYSTP (101 aa). The cysteines at positions 43 and 114 are disulfide-linked. The segment at 44–60 is complementarity-determining-1; the sequence is KSSQSVLYSSNNKNYLA. Positions 61-75 are framework-2; it reads WYQQKPGQPPKLLIY. The interval 76–82 is complementarity-determining-2; that stretch reads WASTRES. Residues 83 to 114 form a framework-3 region; sequence GVPDRFSGSGSGTDFTLTISSLQAEDVAVYYC. The complementarity-determining-3 stretch occupies residues 115–121; the sequence is QQYYSTP.

Immunoglobulins are composed of two identical heavy chains and two identical light chains; disulfide-linked.

Its subcellular location is the secreted. It is found in the cell membrane. Functionally, v segment of the variable domain of immunoglobulins light chain that participates in the antigen recognition. Immunoglobulins, also known as antibodies, are membrane-bound or secreted glycoproteins produced by B lymphocytes. In the recognition phase of humoral immunity, the membrane-bound immunoglobulins serve as receptors which, upon binding of a specific antigen, trigger the clonal expansion and differentiation of B lymphocytes into immunoglobulins-secreting plasma cells. Secreted immunoglobulins mediate the effector phase of humoral immunity, which results in the elimination of bound antigens. The antigen binding site is formed by the variable domain of one heavy chain, together with that of its associated light chain. Thus, each immunoglobulin has two antigen binding sites with remarkable affinity for a particular antigen. The variable domains are assembled by a process called V-(D)-J rearrangement and can then be subjected to somatic hypermutations which, after exposure to antigen and selection, allow affinity maturation for a particular antigen. In Homo sapiens (Human), this protein is Immunoglobulin kappa variable 4-1.